Reading from the N-terminus, the 221-residue chain is MCKEIEGQKLFGSAIILAGGRSSRMGFDKQFIEINEKRLIEITAGRLAQIFDEIIIVTNRPEMHSCCQYKLTSDIIKGKGPLGGIHAGLLAAESEFVFAIACDMPYINLDYIEHMKCVVESSIKAGEDIDACITLKGEWIEPFNAFYRKSLVKSIEEHLESDKRAVYSLLKQLNTTYISEFEARRFSPDWSMFFNMNTMEELRQYSQVTQEEKPNGKVEIL.

GTP-binding positions include 17–19 (LAG), lysine 29, aspartate 74, and aspartate 103. Aspartate 103 is a Mg(2+) binding site.

Belongs to the MobA family. Mg(2+) is required as a cofactor.

It localises to the cytoplasm. The catalysed reaction is Mo-molybdopterin + GTP + H(+) = Mo-molybdopterin guanine dinucleotide + diphosphate. Functionally, transfers a GMP moiety from GTP to Mo-molybdopterin (Mo-MPT) cofactor (Moco or molybdenum cofactor) to form Mo-molybdopterin guanine dinucleotide (Mo-MGD) cofactor. In Peptoclostridium acidaminophilum (Eubacterium acidaminophilum), this protein is Probable molybdenum cofactor guanylyltransferase.